A 47-amino-acid chain; its full sequence is ATP-dependent zinc metalloprotease FTSH, chloroplastic (47 aa).

In the N-terminal section; belongs to the AAA ATPase family. This sequence in the C-terminal section; belongs to the peptidase M41 family. Zn(2+) serves as cofactor.

It localises to the plastid. Its subcellular location is the chloroplast membrane. Its function is as follows. Seems to act as an ATP-dependent zinc metallopeptidase. This Populus euphratica (Euphrates poplar) protein is ATP-dependent zinc metalloprotease FTSH, chloroplastic.